Reading from the N-terminus, the 467-residue chain is MESSTGPRMPLLKYCSVATSLKAPGWDGAAPPWDLSFTYPFALQAPWLTGHKPLARHASSCPCLHVADPAWQGPGWLGRAGDAANTWVLARREADGFYYRAQIKATPELERQGVLLVEFEAPLVAGPKLPAQQQRVVLEEDVIPLSPSVGYSLRPGDKVLALWEPGQQQYGPGTVLLGLEMRDPQRASKEKEITVHFWNGKAAKVPLGGVQSVSLTIWKKAVERLHKSFTREHPRPLHWAPCCSLLGPITGRITNELPPDAPFLCPLCHHHACCQLLCQGCLCGCPPCGTTWWPLTRTSEVMARELPELEPTAQLLPLEGPKEEKVAMHAPLAVSSSSSSSCEQDGVENDLEMGPPQRLMVNSAVNTDPIFLEMPLRQSGLCQPEWRYWKRNGPEPCLGKPGTRYSNICKEEKDHKQQRAQTAVVGTTKELVSKATHMKPPRTPPGEAEHRKRSQSLAICQWNKNSR.

A disordered region spans residues lysine 416–arginine 467. Positions glutamine 455–arginine 467 are enriched in polar residues.

This is an uncharacterized protein from Homo sapiens (Human).